A 569-amino-acid chain; its full sequence is Formate--tetrahydrofolate ligase (569 aa).

ATP is bound at residue 68–75; it reads TPAGEGKT.

The protein belongs to the formate--tetrahydrofolate ligase family.

The enzyme catalyses (6S)-5,6,7,8-tetrahydrofolate + formate + ATP = (6R)-10-formyltetrahydrofolate + ADP + phosphate. The protein operates within one-carbon metabolism; tetrahydrofolate interconversion. This Psychrobacter sp. (strain PRwf-1) protein is Formate--tetrahydrofolate ligase.